The chain runs to 974 residues: GATOR2 complex protein WDR59 (974 aa).

7 WD repeats span residues 57–98 (QSKW…GEVG), 103–143 (GHTR…KPTV), 146–185 (SAVA…TAVE), 189–229 (AHLS…KYLN), 232–276 (PCQV…TPVH), 278–318 (FVGH…RVDS), and 319–362 (QMQR…TASH). The tract at residues 350 to 374 (HTEDTDHQHTASHGEEEALKEDPPR) is disordered. The 102-residue stretch at 393 to 494 (QEFSLINVQI…RQLVSCLESF (102 aa)) folds into the RWD domain. Ser564 bears the Phosphoserine mark. The WD 8 repeat unit spans residues 668–706 (LNVNDIQETCQKNAASALLVGRKDLVQVWSLATVATDLC). 3 positions are modified to phosphoserine: Ser821, Ser822, and Ser830. The segment at 831–852 (LTYSDPRERERDQHDKNKRLLD) is disordered. Residues 835-851 (DPRERERDQHDKNKRLL) show a composition bias toward basic and acidic residues. A C4-type zinc finger spans residues 901-920 (YCSHCRSEVRGTQCAICKGF). Positions 902, 905, 914, 917, 927, 938, 943, 946, 949, 960, 964, 966, and 968 each coordinate Zn(2+). The segment at 921 to 973 (TFQCAICHVAVRGSSNFCLTCGHGGHTSHMMEWFRTQEVCPTGCGCHCLLEST) adopts an RING-type; atypical zinc-finger fold.

The protein belongs to the WD repeat WDR59 family. Component of the GATOR2 subcomplex, composed of MIOS, SEC13, SEH1L, WDR24 and WDR59. The GATOR2 complex interacts with CASTOR1 and CASTOR2; the interaction is negatively regulated by arginine. The GATOR2 complex interacts with SESN1, SESN2 and SESN3; the interaction is negatively regulated by amino acids. Interacts with DDB1-CUL4A/B E3 ligase complexes.

Its subcellular location is the lysosome membrane. With respect to regulation, the GATOR2 complex is negatively regulated by the upstream amino acid sensors CASTOR1 and SESN2, which sequester the GATOR2 complex in absence of amino acids. In the presence of abundant amino acids, GATOR2 is released from CASTOR1 and SESN2 and activated. Functionally, as a component of the GATOR2 complex, functions as an activator of the amino acid-sensing branch of the mTORC1 signaling pathway. The GATOR2 complex indirectly activates mTORC1 through the inhibition of the GATOR1 subcomplex. GATOR2 probably acts as an E3 ubiquitin-protein ligase toward GATOR1. In the presence of abundant amino acids, the GATOR2 complex mediates ubiquitination of the NPRL2 core component of the GATOR1 complex, leading to GATOR1 inactivation. In the absence of amino acids, GATOR2 is inhibited, activating the GATOR1 complex. This is GATOR2 complex protein WDR59 from Homo sapiens (Human).